The sequence spans 409 residues: Nucleoprotein (409 aa).

Disordered stretches follow at residues 1 to 32 (MASG…SSGN), 47 to 84 (PQPK…KSGR), 121 to 145 (ADTK…LRFS), and 164 to 194 (RSGR…GAED). Residues 29-160 (SSGNASWFQA…GNFRWDFIPL (132 aa)) form an RNA-binding region. A CoV N NTD domain is found at 31–156 (GNASWFQAIK…GGPDGNFRWD (126 aa)). A compositionally biased stretch (polar residues) spans 57–68 (PDNNNIKPSQQH). The segment covering 70-84 (YWRRQARYKPGKSGR) has biased composition (basic residues). The segment covering 164-179 (RSGRSTAASSAASSRA) has biased composition (low complexity). The span at 180–192 (PSREGSRGRRSGA) shows a compositional bias: basic and acidic residues. Serine 190 is subject to Phosphoserine; by host. In terms of domain architecture, CoV N CTD spans 215–331 (TKAKADEMAH…QCVDGVGTRP (117 aa)). The interval 226-333 (RYCKRTIPPG…VDGVGTRPKD (108 aa)) is dimerization. Cysteines 320 and 323 form a disulfide. Residues 326–409 (GVGTRPKDDE…GDSALGENEL (84 aa)) are disordered. Positions 358–367 (QRPKKEKKPK) are enriched in basic residues. Positions 368–384 (KQDDEVDKALTSDEERN) are enriched in basic and acidic residues. Threonine 378 is subject to Phosphothreonine; by host. Serine 379 is modified (phosphoserine; by host).

The protein belongs to the gammacoronavirus nucleocapsid protein family. In terms of assembly, homooligomer. Both monomeric and oligomeric forms interact with RNA. Interacts with protein M. Interacts with NSP3; this interaction serves to tether the genome to the newly translated replicase-transcriptase complex at a very early stage of infection. Post-translationally, ADP-ribosylated. The ADP-ribosylation is retained in the virion during infection. In terms of processing, phosphorylated on serine and threonine residues.

The protein localises to the virion. Its subcellular location is the host endoplasmic reticulum-Golgi intermediate compartment. The protein resides in the host Golgi apparatus. Its function is as follows. Packages the positive strand viral genome RNA into a helical ribonucleocapsid (RNP) and plays a fundamental role during virion assembly through its interactions with the viral genome and membrane protein M. Plays an important role in enhancing the efficiency of subgenomic viral RNA transcription as well as viral replication. The chain is Nucleoprotein from Gallus gallus (Chicken).